The following is a 217-amino-acid chain: Orotidine 5'-phosphate decarboxylase (217 aa).

Residues aspartate 14, lysine 36, 64–73 (DFKVADIPST), serine 120, 172–182 (PGVGAQGGNLS), glycine 197, and arginine 198 contribute to the substrate site. Catalysis depends on lysine 66, which acts as the Proton donor.

Belongs to the OMP decarboxylase family. Type 1 subfamily. As to quaternary structure, homodimer.

It catalyses the reaction orotidine 5'-phosphate + H(+) = UMP + CO2. It participates in pyrimidine metabolism; UMP biosynthesis via de novo pathway; UMP from orotate: step 2/2. In terms of biological role, catalyzes the decarboxylation of orotidine 5'-monophosphate (OMP) to uridine 5'-monophosphate (UMP). This Methanococcus maripaludis (strain DSM 14266 / JCM 13030 / NBRC 101832 / S2 / LL) protein is Orotidine 5'-phosphate decarboxylase.